A 314-amino-acid polypeptide reads, in one-letter code: Ribose-phosphate pyrophosphokinase (314 aa).

Residues 37–39 (DGE) and 96–97 (RQ) each bind ATP. Residues H131 and D170 each coordinate Mg(2+). The active site involves K194. D-ribose 5-phosphate-binding positions include R196, D220, and 224–228 (DTGGT).

This sequence belongs to the ribose-phosphate pyrophosphokinase family. Class I subfamily. In terms of assembly, homohexamer. Mg(2+) is required as a cofactor.

Its subcellular location is the cytoplasm. The catalysed reaction is D-ribose 5-phosphate + ATP = 5-phospho-alpha-D-ribose 1-diphosphate + AMP + H(+). It participates in metabolic intermediate biosynthesis; 5-phospho-alpha-D-ribose 1-diphosphate biosynthesis; 5-phospho-alpha-D-ribose 1-diphosphate from D-ribose 5-phosphate (route I): step 1/1. Functionally, involved in the biosynthesis of the central metabolite phospho-alpha-D-ribosyl-1-pyrophosphate (PRPP) via the transfer of pyrophosphoryl group from ATP to 1-hydroxyl of ribose-5-phosphate (Rib-5-P). This chain is Ribose-phosphate pyrophosphokinase, found in Vibrio vulnificus (strain CMCP6).